Here is a 59-residue protein sequence, read N- to C-terminus: Ribosome biogenesis protein Nop10 (59 aa).

Belongs to the NOP10 family.

In terms of biological role, involved in ribosome biogenesis; more specifically in 18S rRNA pseudouridylation and in cleavage of pre-rRNA. The chain is Ribosome biogenesis protein Nop10 from Thermococcus gammatolerans (strain DSM 15229 / JCM 11827 / EJ3).